The following is a 957-amino-acid chain: Glycine dehydrogenase (decarboxylating) (957 aa).

Lysine 704 carries the N6-(pyridoxal phosphate)lysine modification.

The protein belongs to the GcvP family. The glycine cleavage system is composed of four proteins: P, T, L and H. Requires pyridoxal 5'-phosphate as cofactor.

It carries out the reaction N(6)-[(R)-lipoyl]-L-lysyl-[glycine-cleavage complex H protein] + glycine + H(+) = N(6)-[(R)-S(8)-aminomethyldihydrolipoyl]-L-lysyl-[glycine-cleavage complex H protein] + CO2. Its function is as follows. The glycine cleavage system catalyzes the degradation of glycine. The P protein binds the alpha-amino group of glycine through its pyridoxal phosphate cofactor; CO(2) is released and the remaining methylamine moiety is then transferred to the lipoamide cofactor of the H protein. This is Glycine dehydrogenase (decarboxylating) from Bordetella petrii (strain ATCC BAA-461 / DSM 12804 / CCUG 43448).